The sequence spans 760 residues: UDP-N-acetylmuramoyl-L-alanyl-D-glutamate--2,6-diaminopimelate ligase MurE homolog, chloroplastic (760 aa).

The N-terminal 59 residues, 1 to 59 (MATAPLAFRLPFPFSFPSASRPPPSRILAPPTPRRLPLRLAAAAARRFRPPTADDEPPE), are a transit peptide targeting the chloroplast. Disordered regions lie at residues 13–159 (PFSF…TDEL) and 176–205 (LSVV…DEDG). Over residues 20-34 (SRPPPSRILAPPTPR) the composition is skewed to pro residues. The segment covering 53 to 62 (ADDEPPEAAE) has biased composition (acidic residues). A compositionally biased stretch (basic and acidic residues) spans 118 to 132 (EIDRAIAEKREEFTR). Composition is skewed to acidic residues over residues 150 to 159 (PEDEDLTDEL) and 182 to 205 (ADEE…DEDG).

The protein belongs to the MurCDEF family. MurE subfamily. As to quaternary structure, component of the plastid-encoded plastid RNA polymerase (PEP) complex.

It localises to the plastid. The protein localises to the chloroplast. In terms of biological role, required for the activity of the plastid-encoded RNA polymerase (PEP) and full expression of genes transcribed by PEP. Required for the proper build-up and formation of the PEP-complex. The sequence is that of UDP-N-acetylmuramoyl-L-alanyl-D-glutamate--2,6-diaminopimelate ligase MurE homolog, chloroplastic from Zea mays (Maize).